Here is a 1113-residue protein sequence, read N- to C-terminus: Atrial natriuretic peptide-converting enzyme (1113 aa).

Over 1–112 the chain is Cytoplasmic; that stretch reads MGRVSFSVRV…QKLVTANLLR (112 aa). The helical; Signal-anchor for type II membrane protein transmembrane segment at 113–133 threads the bilayer; the sequence is FLLLVLIPCICALIVLLAILL. Residues 134–1113 lie on the Extracellular side of the membrane; the sequence is SFVGTLKRVY…QTFLQKKSQG (980 aa). N-linked (GlcNAc...) asparagine glycans are attached at residues Asn-147, Asn-202, and Asn-208. Positions 176 to 202 are disordered; the sequence is APSLPPSQSTPAWTPRAPSPEDQSHRN. The FZ 1 domain occupies 201-327; the sequence is RNTSTCMNIT…SSVRKSCFSL (127 aa). 8 disulfides stabilise this stretch: Cys-206/Cys-266, Cys-214/Cys-259, Cys-250/Cys-290, Cys-279/Cys-324, Cys-283/Cys-307, Cys-337/Cys-350, Cys-345/Cys-363, and Cys-357/Cys-372. N-linked (GlcNAc...) asparagine glycans are attached at residues Asn-298 and Asn-317. LDL-receptor class A domains are found at residues 336–372, 373–408, 409–445, and 446–483; these read LCGG…EAHC, NCSK…EQNC, DCNL…EVNC, and SCHS…ENCS. Residue Asn-373 is glycosylated (N-linked (GlcNAc...) asparagine). Intrachain disulfides connect Cys-374-Cys-386, Cys-381-Cys-399, Cys-393-Cys-408, Cys-410-Cys-423, Cys-418-Cys-436, Cys-430-Cys-445, Cys-447-Cys-460, Cys-455-Cys-473, and Cys-467-Cys-482. N-linked (GlcNAc...) asparagine glycosylation occurs at Asn-411. N-linked (GlcNAc...) asparagine glycosylation is present at Asn-444. Residues Asn-481, Asn-519, and Asn-537 are each glycosylated (N-linked (GlcNAc...) asparagine). The FZ 2 domain occupies 518–641; that stretch reads SNCSQCEPIT…SSDNQTCLLP (124 aa). Cystine bridges form between Cys-523–Cys-586, Cys-531–Cys-579, Cys-570–Cys-608, Cys-597–Cys-638, Cys-601–Cys-625, Cys-648–Cys-660, Cys-655–Cys-673, Cys-667–Cys-682, Cys-684–Cys-698, Cys-692–Cys-711, Cys-705–Cys-720, Cys-723–Cys-735, Cys-730–Cys-748, and Cys-742–Cys-757. N-linked (GlcNAc...) asparagine glycosylation occurs at Asn-635. 3 LDL-receptor class A domains span residues 647–682, 683–721, and 722–757; these read ECSP…EENC, GCKE…KNCS, and FCQD…EWGC. Asn-719 is a glycosylation site (N-linked (GlcNAc...) asparagine). Residues 758–853 form the SRCR domain; the sequence is VTLSKNGNSS…SRSEISLLCS (96 aa). Asn-765 and Asn-828 each carry an N-linked (GlcNAc...) asparagine glycan. Cystine bridges form between Cys-782-Cys-884, Cys-857-Cys-979, Cys-895-Cys-911, Cys-993-Cys-1058, Cys-1022-Cys-1037, and Cys-1048-Cys-1077. The Peptidase S1 domain maps to 869-1102; that stretch reads ILGGRTSRPG…FVGWIERQIY (234 aa). Catalysis depends on charge relay system residues His-910 and Asp-959. Asn-970 carries N-linked (GlcNAc...) asparagine glycosylation. Ser-1052 functions as the Charge relay system in the catalytic mechanism. A glycan (N-linked (GlcNAc...) asparagine) is linked at Asn-1089.

This sequence belongs to the peptidase S1 family. In terms of processing, N-glycosylated; required for processing and activation. Activated through proteolytic processing by a trypsin-like protease; cleaved into a N-terminal propeptide and an activated corin protease fragment. Atrial natriuretic peptide-converting enzyme, 180 kDa soluble fragment is produced by cleavage by ADAM10. Cleavage by ADAM10 to produce soluble 180 kDa soluble fragment takes place after the transmembrane region and before FZ 1. Post-translationally, a disulfide bond links the activated corin protease fragment and the N-terminal propeptide. The disulfide bond also links the activated corin protease fragment with Atrial natriuretic peptide-converting enzyme, 180 kDa soluble fragment. Highly expressed in heart. Also expressed in pregnant uterus.

It is found in the cell membrane. It localises to the secreted. In terms of biological role, serine-type endopeptidase involved in atrial natriuretic peptide (NPPA) processing. Converts through proteolytic cleavage the non-functional propeptide NPPA into the active hormone, thereby regulating blood pressure in heart and promoting natriuresis, diuresis and vasodilation. Proteolytic cleavage of pro-NPPA also plays a role in female pregnancy by promoting trophoblast invasion and spiral artery remodeling in uterus. Also acts as a regulator of sodium reabsorption in kidney. May also process pro-NPPB the B-type natriuretic peptide. In Mus musculus (Mouse), this protein is Atrial natriuretic peptide-converting enzyme (Corin).